The chain runs to 415 residues: Serine hydroxymethyltransferase 2 (415 aa).

(6S)-5,6,7,8-tetrahydrofolate-binding positions include Leu121 and 125–127 (GHL). N6-(pyridoxal phosphate)lysine is present on Lys229.

The protein belongs to the SHMT family. In terms of assembly, homodimer. Requires pyridoxal 5'-phosphate as cofactor.

The protein resides in the cytoplasm. The enzyme catalyses (6R)-5,10-methylene-5,6,7,8-tetrahydrofolate + glycine + H2O = (6S)-5,6,7,8-tetrahydrofolate + L-serine. It functions in the pathway one-carbon metabolism; tetrahydrofolate interconversion. It participates in amino-acid biosynthesis; glycine biosynthesis; glycine from L-serine: step 1/1. Its function is as follows. Catalyzes the reversible interconversion of serine and glycine with tetrahydrofolate (THF) serving as the one-carbon carrier. This reaction serves as the major source of one-carbon groups required for the biosynthesis of purines, thymidylate, methionine, and other important biomolecules. Also exhibits THF-independent aldolase activity toward beta-hydroxyamino acids, producing glycine and aldehydes, via a retro-aldol mechanism. In Bordetella parapertussis (strain 12822 / ATCC BAA-587 / NCTC 13253), this protein is Serine hydroxymethyltransferase 2.